The chain runs to 55 residues: uncharacterized protein (55 aa).

A helical transmembrane segment spans residues Ser27 to Phe44.

The protein resides in the membrane. This is an uncharacterized protein from Dictyostelium discoideum (Social amoeba).